We begin with the raw amino-acid sequence, 2219 residues long: E3 ubiquitin-protein ligase Ubr3 (2219 aa).

2 disordered regions span residues Met-1 to Ser-48 and Ala-78 to Ser-134. Positions Val-20–Met-29 are enriched in basic and acidic residues. Residues Glu-31 to Ser-42 show a composition bias toward acidic residues. Positions Gly-114–Ser-134 are enriched in low complexity. The UBR-type zinc finger occupies Ala-222–Ile-293. 2 disordered regions span residues Ser-1348–Val-1367 and Gln-1440–Glu-1464. Residues Asp-1353–Val-1367 show a composition bias toward acidic residues. An RING-type; degenerate zinc finger spans residues Cys-1607 to Arg-1643. Disordered stretches follow at residues Val-1872 to Gln-1902 and Ser-1935 to Ser-1954. Positions Ser-1877–Ala-1888 are enriched in low complexity.

This sequence belongs to the E3 ubiquitin-protein ligase UBR1-like family. In terms of assembly, selectively interacts (via UBR-type zinc finger) with the cleaved form of Diap1; this interaction is enhanced by tal. Interacts with tal and Rrp1. Interacts with ovo isoform B (via N-terminus). Interacts with Cad99C (via the cytoplasmic domain). Interacts with ck and Sans. Interacts with cos (via Kinesin motor domain). In terms of processing, in vitro, self-ubiquitination in the presence of E1, E2 and ubiquitin.

It localises to the cytoplasm. The protein localises to the nucleus. It catalyses the reaction S-ubiquitinyl-[E2 ubiquitin-conjugating enzyme]-L-cysteine + [acceptor protein]-L-lysine = [E2 ubiquitin-conjugating enzyme]-L-cysteine + N(6)-ubiquitinyl-[acceptor protein]-L-lysine.. It functions in the pathway protein modification; protein ubiquitination. Functionally, E3 ubiquitin-protein ligase which is a component of the N-end rule pathway. Recognizes and binds to proteins bearing specific N-terminal residues, leading to their ubiquitination and subsequent degradation. Binds to the E3 ubiquitin-protein ligase Diap1 and enhances its ubiquitination and anti-apoptotic functions. Essential during trichome development for the ubiquitination of the N-terminus of ovo isoform B (svb), converting it from a transcriptional inhibitor to an activator. Positively regulates a hh-signaling pathway which functions in photoreceptor differentiation. Activation of hh up-regulates transcription of Ubr3, which in turn promotes hh signaling by mediating the ubiquitination and degradation of cos. Necessary for auditory transduction: plays a role in Johnston's organ organization by acting in the regulation of zip and ck function in scolopidial apical attachment. Likely to function by acting in a pathway that negatively regulates the ubiquitination of zip, consequently affecting its interaction with ck. May also negatively regulate a component of the SCF (SKP1-CUL1-F-box protein) E3 ubiquitin-protein ligase complex Cul1, which also appears to function in the negative regulation of the zip-ck interaction and scolopidial apical attachment. This is E3 ubiquitin-protein ligase Ubr3 from Drosophila melanogaster (Fruit fly).